A 148-amino-acid chain; its full sequence is Small ribosomal subunit protein bS6 (148 aa).

The disordered stretch occupies residues 96–148 (HEEGQSAMLTRRDDRRERDGDDRPRRREGGFDRGDRGDRGPRRPRDTEAGEGA).

The protein belongs to the bacterial ribosomal protein bS6 family.

In terms of biological role, binds together with bS18 to 16S ribosomal RNA. The polypeptide is Small ribosomal subunit protein bS6 (Brucella canis (strain ATCC 23365 / NCTC 10854 / RM-666)).